Reading from the N-terminus, the 415-residue chain is Protein fuzzy homolog (415 aa).

The protein belongs to the fuzzy family. Component of the CPLANE (ciliogenesis and planar polarity effectors) complex, composed of INTU, FUZ and WDPCP. Interacts with CPLANE1. Interacts with CPLANE2. In terms of tissue distribution, expressed in dermal and epidermal cells.

Its subcellular location is the cytoplasm. The protein resides in the cytoskeleton. It is found in the cilium basal body. Functionally, probable planar cell polarity effector involved in cilium biogenesis. May regulate protein and membrane transport to the cilium. Proposed to function as core component of the CPLANE (ciliogenesis and planar polarity effectors) complex involved in the recruitment of peripheral IFT-A proteins to basal bodies. May regulate the morphogenesis of hair follicles which depends on functional primary cilia. Binds phosphatidylinositol 3-phosphate with highest affinity, followed by phosphatidylinositol 4-phosphate and phosphatidylinositol 5-phosphate. The polypeptide is Protein fuzzy homolog (Fuz) (Mus musculus (Mouse)).